A 516-amino-acid polypeptide reads, in one-letter code: rRNA N(6)-adenosine-methyltransferase ZCCHC4 (516 aa).

Zn(2+) is bound by residues C40, H42, C66, C75, C127, C130, H142, and H145. The GRF-type zinc finger occupies 40–84 (CPHELGPTLLFVKVNQGKEETRRFYACSACRDRKDCNFFQWEDEK). S-adenosyl-L-methionine is bound by residues 174 to 177 (QYLF), R204, D227, 245 to 246 (NM), and D278. The regulatory loop stretch occupies residues 339-360 (QVVDYDNHALYKHGKTGRKQSP). Residues C383, C386, H396, C397, C400, C403, H413, C414, C417, C420, H427, C428, C431, C434, H439, and C441 each contribute to the Zn(2+) site. The DHHC domain maps to 398 to 448 (EHCNSCTSKDGRKWNHCFLCKKCVKPSWIHCSICNHCALPDHSCKGPKDGC). The CCHC-type zinc finger occupies 446–463 (DGCFICGELDHKRSACPN). Basic residues predominate over residues 472-484 (KAVRKQKQRKSNK). The tract at residues 472 to 516 (KAVRKQKQRKSNKMKMETTKGQSMNHTSATRKKKRRERTHQYLCS) is disordered. Residues 490-499 (TKGQSMNHTS) show a composition bias toward polar residues. Positions 500-509 (ATRKKKRRER) are enriched in basic residues.

Belongs to the ZCCHC4 family. As to quaternary structure, interacts with components of the ASC-1 complex TRIP4, ASCC1, ASCC2 and ASCC3. Interact with AHCYL1 and AHCYL2. Interact with YTHDC2.

The protein resides in the cytoplasm. Its subcellular location is the nucleus. It localises to the nucleolus. The catalysed reaction is adenosine(4220) in 28S rRNA + S-adenosyl-L-methionine = N(6)-methyladenosine(4220) in 28S rRNA + S-adenosyl-L-homocysteine + H(+). RRNA N6-methyltransferase that specifically methylates the adenine in position 4220 of 28S rRNA. N6-methylation of adenine(4220) in 28S rRNA is required for translation. This is rRNA N(6)-adenosine-methyltransferase ZCCHC4 from Bos taurus (Bovine).